The chain runs to 484 residues: Probable receptor-like protein kinase At5g18500 (484 aa).

Residues 21–41 (IIVIVLSAIFVVVLAISLWLT) form a helical membrane-spanning segment. A disordered region spans residues 72–135 (RVDEVSSSNG…SVSSANPLTA (64 aa)). The span at 91–105 (KFGDKEPEKGIKAES) shows a compositional bias: basic and acidic residues. Positions 125–134 (SSVSSANPLT) are enriched in polar residues. Thr155 bears the Phosphothreonine mark. The region spanning 166 to 445 (FSRDNIIGDG…MLESEEYPIA (280 aa)) is the Protein kinase domain. ATP is bound by residues 172 to 180 (IGDGGYGVV) and Lys194. The residue at position 239 (Tyr239) is a Phosphotyrosine. Asp292 functions as the Proton acceptor in the catalytic mechanism. Position 296 is a phosphoserine (Ser296). Phosphothreonine occurs at positions 326 and 331. Residue Tyr339 is modified to Phosphotyrosine. A disordered region spans residues 425–484 (EKRPRMSQVARMLESEEYPIAREDRRRRRSQNGTTRDSDPPRNSTDTDKSEYHDLKPEGG). A compositionally biased stretch (basic and acidic residues) spans 460-484 (RDSDPPRNSTDTDKSEYHDLKPEGG).

It belongs to the protein kinase superfamily. Ser/Thr protein kinase family.

The protein resides in the cell membrane. It carries out the reaction L-seryl-[protein] + ATP = O-phospho-L-seryl-[protein] + ADP + H(+). The enzyme catalyses L-threonyl-[protein] + ATP = O-phospho-L-threonyl-[protein] + ADP + H(+). In Arabidopsis thaliana (Mouse-ear cress), this protein is Probable receptor-like protein kinase At5g18500.